The following is a 682-amino-acid chain: Probable methyltransferase PMT12 (682 aa).

The Cytoplasmic portion of the chain corresponds to 1–11 (MKLFLNSNLLR). The chain crosses the membrane as a helical; Signal-anchor for type II membrane protein span at residues 12–32 (NSIFFKISAFVLISVACFFLG). The Lumenal segment spans residues 33 to 682 (KHWSEDGFRR…KRRKTKGKRA (650 aa)). Asn67, Asn103, Asn125, Asn155, Asn173, Asn193, Asn273, Asn350, Asn395, Asn419, Asn600, and Asn625 each carry an N-linked (GlcNAc...) asparagine glycan.

It belongs to the methyltransferase superfamily.

Its subcellular location is the golgi apparatus membrane. The chain is Probable methyltransferase PMT12 from Arabidopsis thaliana (Mouse-ear cress).